The chain runs to 585 residues: Probable monoterpene synthase MTS1, chloroplastic (585 aa).

The segment at 1–29 (MSLSGVPLSAGLAPSPSNKPTNGKGQNIV) is disordered. The transit peptide at 1–31 (MSLSGVPLSAGLAPSPSNKPTNGKGQNIVRR) directs the protein to the chloroplast. A compositionally biased stretch (polar residues) spans 15–25 (SPSNKPTNGKG). Residues arginine 298, aspartate 335, aspartate 339, arginine 476, and aspartate 479 each contribute to the (2E)-geranyl diphosphate site. Residues aspartate 335 and aspartate 339 each coordinate Mg(2+). Residues 335–339 (DDIYD) carry the DDXXD motif motif. Mg(2+)-binding residues include aspartate 479, threonine 483, and glutamate 487.

Belongs to the terpene synthase family. Tpsb subfamily. It depends on Mg(2+) as a cofactor. Mn(2+) serves as cofactor. As to expression, expressed in trichomes. Detected in flowers, but not in leaves.

It is found in the plastid. The protein resides in the chloroplast. The protein is Probable monoterpene synthase MTS1, chloroplastic of Humulus lupulus (European hop).